Here is a 395-residue protein sequence, read N- to C-terminus: uncharacterized protein (395 aa).

Residues 288-318 (VAKGKEIDNAEIEKTIKEYENIEEGIEDIVK) are a coiled coil.

This is an uncharacterized protein from Ostreid herpesvirus 1 (isolate France) (OsHV-1).